A 481-amino-acid chain; its full sequence is Phloretin 4'-O-glucosyltransferase (481 aa).

Residue histidine 16 is the Proton acceptor of the active site. Histidine 16 lines the an anthocyanidin pocket. Glutamine 354, histidine 369, tryptophan 372, asparagine 373, serine 374, glutamate 377, aspartate 393, and glutamine 394 together coordinate UDP-alpha-D-glucose.

This sequence belongs to the UDP-glycosyltransferase family. As to expression, highly expressed in young leaves, at intermediate level in mature leaves and at low levels in flowers and fruits.

It catalyses the reaction phloretin + UDP-alpha-D-glucose = trilobatin + UDP + H(+). The enzyme catalyses (2S)-naringenin + UDP-alpha-D-glucose = (2S)-naringenin 7-O-beta-D-glucoside + UDP + H(+). Glycosyltransferase that possesses phloretin 4'-O-glycosyltransferase activity. Converts phloretin to trilobatin (phloretin 4'-O-glucoside), a potential antioxidant. Can convert with low efficiency phlorizin and trilobatin to their corresponding di-O-glucosides. Can convert with low efficiency naringenin to naringenin-7-O-glucoside. Can convert with low efficiency quercetin to quercetin-7-O-glucoside. The polypeptide is Phloretin 4'-O-glucosyltransferase (Malus domestica (Apple)).